Reading from the N-terminus, the 398-residue chain is Probable aminomethyltransferase (398 aa).

It belongs to the GcvT family. As to quaternary structure, the glycine cleavage system is composed of four proteins: P, T, L and H.

The catalysed reaction is N(6)-[(R)-S(8)-aminomethyldihydrolipoyl]-L-lysyl-[protein] + (6S)-5,6,7,8-tetrahydrofolate = N(6)-[(R)-dihydrolipoyl]-L-lysyl-[protein] + (6R)-5,10-methylene-5,6,7,8-tetrahydrofolate + NH4(+). Its function is as follows. The glycine cleavage system catalyzes the degradation of glycine. This Pyrococcus abyssi (strain GE5 / Orsay) protein is Probable aminomethyltransferase.